A 239-amino-acid chain; its full sequence is NADH-quinone oxidoreductase subunit I 1 (239 aa).

4Fe-4S ferredoxin-type domains lie at 81 to 111 and 123 to 152; these read LVPREDGKPRCVACYMCATICPAQCIYIEAA and AKFVIDELRCIVCGFCVEACPKDAIRMDSG. Residues C91, C94, C97, C101, C132, C135, C138, and C142 each coordinate [4Fe-4S] cluster.

Belongs to the complex I 23 kDa subunit family. NDH-1 is composed of 14 different subunits. Subunits NuoA, H, J, K, L, M, N constitute the membrane sector of the complex. It depends on [4Fe-4S] cluster as a cofactor.

The protein resides in the cell inner membrane. The enzyme catalyses a quinone + NADH + 5 H(+)(in) = a quinol + NAD(+) + 4 H(+)(out). In terms of biological role, NDH-1 shuttles electrons from NADH, via FMN and iron-sulfur (Fe-S) centers, to quinones in the respiratory chain. The immediate electron acceptor for the enzyme in this species is believed to be ubiquinone. Couples the redox reaction to proton translocation (for every two electrons transferred, four hydrogen ions are translocated across the cytoplasmic membrane), and thus conserves the redox energy in a proton gradient. This chain is NADH-quinone oxidoreductase subunit I 1, found in Anaeromyxobacter dehalogenans (strain 2CP-C).